A 138-amino-acid polypeptide reads, in one-letter code: Sporulation-specific cell division protein SsgB (138 aa).

This sequence belongs to the SsgA family. In terms of assembly, monomer. Interacts with SsgA. Interacts with FtsZ (via N-terminus).

The protein localises to the cell septum. Functionally, involved in sporulation-specific cell division. Required for early stages of sporulation. Important in the process of growth cessation prior to sporulation-specific cell division. Recruits cell division protein FtsZ to the future septum sites and tethers the contractile ring structure (Z ring) to the cytoplasmic membrane during sporulation. Stimulates polymerization and filament length of FtsZ in vitro. This chain is Sporulation-specific cell division protein SsgB, found in Thermobifida fusca (strain YX).